A 463-amino-acid polypeptide reads, in one-letter code: Bifunctional protein GlmU (463 aa).

Residues 1–228 (MEQALSIVVL…PAEVQGVNDR (228 aa)) form a pyrophosphorylase region. UDP-N-acetyl-alpha-D-glucosamine contacts are provided by residues 10–13 (LAAG), lysine 24, glutamine 75, 80–81 (GT), 102–104 (YGD), glycine 138, glutamate 153, asparagine 168, and asparagine 226. Aspartate 104 provides a ligand contact to Mg(2+). Mg(2+) is bound at residue asparagine 226. Residues 229-249 (VQLAAAERVWQRRQAEDWMRA) form a linker region. The N-acetyltransferase stretch occupies residues 250 to 463 (GVTILDPDRF…RPDRGEGSDA (214 aa)). Residues arginine 332 and lysine 350 each coordinate UDP-N-acetyl-alpha-D-glucosamine. Histidine 362 serves as the catalytic Proton acceptor. UDP-N-acetyl-alpha-D-glucosamine-binding residues include tyrosine 365 and asparagine 376. Residues alanine 379, 385 to 386 (NY), serine 404, alanine 422, and arginine 439 each bind acetyl-CoA. Residues 437–463 (VARSAQRSIHGWRRPGQRPDRGEGSDA) form a disordered region. The span at 453–463 (QRPDRGEGSDA) shows a compositional bias: basic and acidic residues.

The protein in the N-terminal section; belongs to the N-acetylglucosamine-1-phosphate uridyltransferase family. In the C-terminal section; belongs to the transferase hexapeptide repeat family. As to quaternary structure, homotrimer. Requires Mg(2+) as cofactor.

The protein localises to the cytoplasm. The enzyme catalyses alpha-D-glucosamine 1-phosphate + acetyl-CoA = N-acetyl-alpha-D-glucosamine 1-phosphate + CoA + H(+). It carries out the reaction N-acetyl-alpha-D-glucosamine 1-phosphate + UTP + H(+) = UDP-N-acetyl-alpha-D-glucosamine + diphosphate. It participates in nucleotide-sugar biosynthesis; UDP-N-acetyl-alpha-D-glucosamine biosynthesis; N-acetyl-alpha-D-glucosamine 1-phosphate from alpha-D-glucosamine 6-phosphate (route II): step 2/2. It functions in the pathway nucleotide-sugar biosynthesis; UDP-N-acetyl-alpha-D-glucosamine biosynthesis; UDP-N-acetyl-alpha-D-glucosamine from N-acetyl-alpha-D-glucosamine 1-phosphate: step 1/1. The protein operates within bacterial outer membrane biogenesis; LPS lipid A biosynthesis. Catalyzes the last two sequential reactions in the de novo biosynthetic pathway for UDP-N-acetylglucosamine (UDP-GlcNAc). The C-terminal domain catalyzes the transfer of acetyl group from acetyl coenzyme A to glucosamine-1-phosphate (GlcN-1-P) to produce N-acetylglucosamine-1-phosphate (GlcNAc-1-P), which is converted into UDP-GlcNAc by the transfer of uridine 5-monophosphate (from uridine 5-triphosphate), a reaction catalyzed by the N-terminal domain. The sequence is that of Bifunctional protein GlmU from Alkalilimnicola ehrlichii (strain ATCC BAA-1101 / DSM 17681 / MLHE-1).